Reading from the N-terminus, the 950-residue chain is Nonsense-mediated mRNA decay factor SMG8 (950 aa).

2 disordered regions span residues 560–607 (HTGK…LSPT) and 624–651 (NESQ…ADTE). Over residues 568 to 582 (QDEDGEEDAEDEEGQ) the composition is skewed to acidic residues. Residues 593-607 (QNTASNGCSQPLSPT) show a composition bias toward polar residues. Residues 624–648 (NESQASSEQLSNSEQNSTSSGTSSA) are compositionally biased toward low complexity.

The protein belongs to the SMG8 family.

Functionally, involved in nonsense-mediated decay (NMD) of mRNAs containing premature stop codons. Probable component of kinase complex containing nonC and recruited to stalled ribosomes. The chain is Nonsense-mediated mRNA decay factor SMG8 from Drosophila yakuba (Fruit fly).